The primary structure comprises 304 residues: 4-diphosphocytidyl-2-C-methyl-D-erythritol kinase (304 aa).

Lys18 is an active-site residue. 103-113 is an ATP binding site; that stretch reads PVAAGIGGGSA. Asp145 is an active-site residue.

This sequence belongs to the GHMP kinase family. IspE subfamily.

It catalyses the reaction 4-CDP-2-C-methyl-D-erythritol + ATP = 4-CDP-2-C-methyl-D-erythritol 2-phosphate + ADP + H(+). Its pathway is isoprenoid biosynthesis; isopentenyl diphosphate biosynthesis via DXP pathway; isopentenyl diphosphate from 1-deoxy-D-xylulose 5-phosphate: step 3/6. Its function is as follows. Catalyzes the phosphorylation of the position 2 hydroxy group of 4-diphosphocytidyl-2C-methyl-D-erythritol. The protein is 4-diphosphocytidyl-2-C-methyl-D-erythritol kinase of Rhodospirillum rubrum (strain ATCC 11170 / ATH 1.1.1 / DSM 467 / LMG 4362 / NCIMB 8255 / S1).